The chain runs to 467 residues: Asparagine--tRNA ligase (467 aa).

The protein belongs to the class-II aminoacyl-tRNA synthetase family. Homodimer.

The protein localises to the cytoplasm. It carries out the reaction tRNA(Asn) + L-asparagine + ATP = L-asparaginyl-tRNA(Asn) + AMP + diphosphate + H(+). In Histophilus somni (strain 2336) (Haemophilus somnus), this protein is Asparagine--tRNA ligase.